Reading from the N-terminus, the 372-residue chain is Virion morphogenesis protein OPG132 (372 aa).

Belongs to the orthopoxvirus OPG132 family.

Its subcellular location is the host cytoplasm. The protein resides in the virion. In terms of biological role, lipid-bound viral membrane assembly protein that plays an essential role in immature virion (IV) to mature virion (MV) transition. Functions in both crescent-shaped viral membranes formation and its enclosure to form immature virions. In addition, participates in targeting mature virion proteins to sites of virion assembly to ensure their correct localization. The polypeptide is Virion morphogenesis protein OPG132 (OPG132) (Homo sapiens (Human)).